A 1203-amino-acid chain; its full sequence is Nitric oxide synthase 3 (1203 aa).

Residues 1–71 (MGNLKSVAQE…PPEGPKFPRV (71 aa)) are disordered. Glycine 2 carries N-myristoyl glycine lipidation. 2 S-palmitoyl cysteine lipidation sites follow: cysteine 15 and cysteine 26. A compositionally biased stretch (gly residues) spans 15 to 27 (CGLGLGLGLGLCG). Threonine 33 is modified (phosphothreonine). Over residues 33-66 (TPAPEPSRAPASLLPPAPEHSPPSSPLTQPPEGP) the composition is skewed to pro residues. Cysteine 94 and cysteine 99 together coordinate Zn(2+). An interaction with NOSIP region spans residues 98 to 486 (RCLGSLVFPR…PDPWKGSAAK (389 aa)). Position 102 (serine 102) interacts with (6R)-L-erythro-5,6,7,8-tetrahydrobiopterin. At serine 114 the chain carries Phosphoserine; by CDK5. Residue cysteine 184 participates in heme b binding. 4 residues coordinate L-arginine: glutamine 247, tryptophan 356, tyrosine 357, and glutamate 361. Arginine 365 contacts (6R)-L-erythro-5,6,7,8-tetrahydrobiopterin. L-arginine is bound at residue asparagine 366. 3 residues coordinate (6R)-L-erythro-5,6,7,8-tetrahydrobiopterin: alanine 446, tryptophan 447, and phenylalanine 460. Heme b is bound at residue tyrosine 475. The interval 491-510 (TRKKTFKEVANAVKISASLM) is calmodulin-binding. The residue at position 495 (threonine 495) is a Phosphothreonine; by AMPK. One can recognise a Flavodoxin-like domain in the interval 520 to 703 (ATILYGSETG…AFRGWAQAAF (184 aa)). FMN contacts are provided by serine 526, glutamate 527, threonine 528, arginine 530, serine 572, and threonine 573. A phosphoserine mark is found at serine 615, serine 633, and serine 638. FMN contacts are provided by serine 654, cysteine 661, glutamate 687, and glutamine 691. One can recognise an FAD-binding FR-type domain in the interval 756–1002 (RKMFQATIRS…IRGAPSFRLP (247 aa)). Arginine 776 is a binding site for NADP(+). Histidine 798 is a binding site for FAD. Residue serine 836 is modified to Phosphoserine. Arginine 938, tyrosine 940, serine 941, threonine 956, alanine 958, tyrosine 962, valine 975, cysteine 976, and serine 977 together coordinate FAD. 7 residues coordinate NADP(+): threonine 1016, arginine 1049, serine 1078, arginine 1079, lysine 1085, tyrosine 1087, and glutamine 1089. Threonine 1175 is modified (phosphothreonine). Serine 1177 is subject to Phosphoserine; by AMPK. Serine 1179 bears the Phosphoserine mark.

Belongs to the NOS family. As to quaternary structure, homodimer. Interacts with NOSIP and NOSTRIN. Interacts with HSP90AB1. Forms a complex with ASL, ASS1 and SLC7A1; the complex regulates cell-autonomous L-arginine synthesis and citrulline recycling while channeling extracellular L-arginine to nitric oxide synthesis pathway. Requires heme b as cofactor. The cofactor is FAD. FMN is required as a cofactor. (6R)-L-erythro-5,6,7,8-tetrahydrobiopterin serves as cofactor. Phosphorylation by AMPK at Ser-1177 in the presence of Ca(2+)-calmodulin (CaM) activates activity. In absence of Ca(2+)-calmodulin, AMPK also phosphorylates Thr-495, resulting in inhibition of activity. Phosphorylation of Ser-114 by CDK5 reduces activity. As to expression, platelets, placenta, liver and kidney.

The protein resides in the cell membrane. Its subcellular location is the membrane. It is found in the caveola. It localises to the cytoplasm. The protein localises to the cytoskeleton. The protein resides in the golgi apparatus. The enzyme catalyses 2 L-arginine + 3 NADPH + 4 O2 + H(+) = 2 L-citrulline + 2 nitric oxide + 3 NADP(+) + 4 H2O. With respect to regulation, stimulated by calcium/calmodulin. Inhibited by NOSIP and NOSTRIN. Functionally, produces nitric oxide (NO) which is implicated in vascular smooth muscle relaxation through a cGMP-mediated signal transduction pathway. NO mediates vascular endothelial growth factor (VEGF)-induced angiogenesis in coronary vessels and promotes blood clotting through the activation of platelets. Its function is as follows. Lacks eNOS activity, dominant-negative form that may down-regulate eNOS activity by forming heterodimers with isoform 1. The protein is Nitric oxide synthase 3 of Homo sapiens (Human).